The sequence spans 513 residues: Bifunctional purine biosynthesis protein PurH (513 aa).

One can recognise an MGS-like domain in the interval Met1–Val145.

This sequence belongs to the PurH family.

It catalyses the reaction (6R)-10-formyltetrahydrofolate + 5-amino-1-(5-phospho-beta-D-ribosyl)imidazole-4-carboxamide = 5-formamido-1-(5-phospho-D-ribosyl)imidazole-4-carboxamide + (6S)-5,6,7,8-tetrahydrofolate. It carries out the reaction IMP + H2O = 5-formamido-1-(5-phospho-D-ribosyl)imidazole-4-carboxamide. Its pathway is purine metabolism; IMP biosynthesis via de novo pathway; 5-formamido-1-(5-phospho-D-ribosyl)imidazole-4-carboxamide from 5-amino-1-(5-phospho-D-ribosyl)imidazole-4-carboxamide (10-formyl THF route): step 1/1. The protein operates within purine metabolism; IMP biosynthesis via de novo pathway; IMP from 5-formamido-1-(5-phospho-D-ribosyl)imidazole-4-carboxamide: step 1/1. The chain is Bifunctional purine biosynthesis protein PurH from Enterococcus faecalis (strain ATCC 700802 / V583).